Consider the following 601-residue polypeptide: Glutathione-regulated potassium-efflux system protein KefB (601 aa).

Transmembrane regions (helical) follow at residues 4 to 24, 29 to 49, 55 to 75, 87 to 107, 115 to 135, 152 to 172, 177 to 197, 207 to 227, 230 to 250, 268 to 288, 291 to 311, 324 to 344, and 356 to 376; these read SDFL…VPLA, IGAV…GLGF, EILH…GLEL, IFGV…GLLM, AAVV…LQLM, VLLF…LLAG, HFDW…LIGG, FIAA…LVLG, LFMD…GVLL, GLLL…GVLY, LLWV…VLYL, MQFA…FSSA, and ALLL…MKLV. The RCK N-terminal domain maps to 400–519; it reads KPQVIVVGFG…AGVTQFSRET (120 aa).

The protein belongs to the monovalent cation:proton antiporter 2 (CPA2) transporter (TC 2.A.37) family. KefB subfamily. As to quaternary structure, interacts with the regulatory subunit KefG.

The protein resides in the cell inner membrane. Functionally, pore-forming subunit of a potassium efflux system that confers protection against electrophiles. Catalyzes K(+)/H(+) antiport. This chain is Glutathione-regulated potassium-efflux system protein KefB, found in Escherichia coli O127:H6 (strain E2348/69 / EPEC).